A 1039-amino-acid polypeptide reads, in one-letter code: Integrin alpha-IIb (1039 aa).

An N-terminal signal peptide occupies residues 1–31 (MARALCPLQALWLLEWVLLLLGPCAAPPAWA). At 32–993 (LNLDPVQLTF…TQLLRALEER (962 aa)) the chain is on the extracellular side. FG-GAP repeat units lie at residues 35–96 (DPVQ…GGQC), 110–173 (VGSQ…RRAE), 187–238 (VEND…FSSY), 251–305 (SLSF…DSYY), 306–371 (QRLH…PHAL), 373–432 (APSL…GLRS), and 435–496 (SQVL…VQDS). Residue Asn46 is glycosylated (N-linked (GlcNAc...) asparagine). Disulfide bonds link Cys87–Cys96, Cys138–Cys161, and Cys177–Cys198. Residues Glu274, Asp276, and Asp278 each contribute to the Ca(2+) site. N-linked (GlcNAc...) asparagine glycosylation occurs at Asn280. 17 residues coordinate Ca(2+): Thr281, Glu283, Asp328, Asn330, Asp332, Arg334, Asp336, Asp396, Asp398, Asp400, Tyr402, Asp404, Asp457, Asp459, Asn461, Tyr463, and Asp465. Disulfide bonds link Cys504–Cys515 and Cys521–Cys576. N-linked (GlcNAc...) asparagine glycosylation occurs at Asn601. 4 disulfides stabilise this stretch: Cys633/Cys639, Cys705/Cys718, Cys857/Cys921, and Cys911/Cys916. An N-linked (GlcNAc...) asparagine glycan is attached at Asn711. O-linked (GalNAc...) serine; in variant S-874 glycosylation occurs at Ile874. Residue Ser878 is glycosylated (O-linked (GalNAc...) serine). Gln891 carries the post-translational modification Pyrrolidone carboxylic acid; in light chain form 1. A glycan (N-linked (GlcNAc...) asparagine) is linked at Asn962. Residues 994–1019 (AIPIWWVLVGVLGGLLLLTILVLAMW) traverse the membrane as a helical segment. Topologically, residues 1020-1039 (KVGFFKRNRPPLEEDDEEGE) are cytoplasmic. The short motif at 1022-1026 (GFFKR) is the GFFKR motif element.

The protein belongs to the integrin alpha chain family. As to quaternary structure, heterodimer of an alpha and a beta subunit. The alpha subunit is composed of a heavy and a light chain linked by a disulfide bond. Alpha-IIb associates with beta-3. Directly interacts with RNF181. Interacts (via C-terminus cytoplasmic tail region) with CIB1; the interaction is direct and calcium-dependent. Interacts (via C-terminus cytoplasmic tail region) with CIB2, CIB3 and CIB4; the interactions are stabilized/increased in a calcium and magnesium-dependent manner. ITGA2B:ITGB3 interacts with PPIA/CYPA; the interaction is ROS and PPIase activity-dependent and is increased in the presence of thrombin. ITGA2B:ITGB3 interacts with SELP (via C-type lectin domain); the interaction mediates cell-cell interaction and adhesion. Cleaved by ELANE; the cleavage promotes activation of platelet fibrinogen receptor integrin alpha-IIb/beta-3. As to expression, isoform 1 and isoform 2 are expressed in platelets and megakaryocytes, but not in reticulocytes. Not detected in Jurkat, nor in U937 cell lines. Isoform 3 is expressed in prostate adenocarcinoma, as well as in several erythroleukemia, prostate adenocarcinoma and melanoma cell lines, including PC-3, DU-145, HEL, WM983A, WM983B and WM35. Not detected in platelets, nor in normal prostate (at protein level).

It is found in the membrane. Its function is as follows. Integrin alpha-IIb/beta-3 is a receptor for fibronectin, fibrinogen, plasminogen, prothrombin, thrombospondin and vitronectin. It recognizes the sequence R-G-D in a wide array of ligands. It recognizes the sequence H-H-L-G-G-G-A-K-Q-A-G-D-V in fibrinogen gamma chain. Following activation integrin alpha-IIb/beta-3 brings about platelet/platelet interaction through binding of soluble fibrinogen. This step leads to rapid platelet aggregation which physically plugs ruptured endothelial cell surface. This chain is Integrin alpha-IIb (ITGA2B), found in Homo sapiens (Human).